The chain runs to 232 residues: Orotate phosphoribosyltransferase (232 aa).

5-phospho-alpha-D-ribose 1-diphosphate is bound by residues Arg-107, Lys-108, Lys-111, and 133-141; that span reads EDLTTDGGS. Thr-137 contributes to the orotate binding site.

This sequence belongs to the purine/pyrimidine phosphoribosyltransferase family. PyrE subfamily. In terms of assembly, homodimer. It depends on Mg(2+) as a cofactor.

The enzyme catalyses orotidine 5'-phosphate + diphosphate = orotate + 5-phospho-alpha-D-ribose 1-diphosphate. It participates in pyrimidine metabolism; UMP biosynthesis via de novo pathway; UMP from orotate: step 1/2. Catalyzes the transfer of a ribosyl phosphate group from 5-phosphoribose 1-diphosphate to orotate, leading to the formation of orotidine monophosphate (OMP). This is Orotate phosphoribosyltransferase from Cereibacter sphaeroides (strain ATCC 17023 / DSM 158 / JCM 6121 / CCUG 31486 / LMG 2827 / NBRC 12203 / NCIMB 8253 / ATH 2.4.1.) (Rhodobacter sphaeroides).